A 272-amino-acid polypeptide reads, in one-letter code: Indole-3-glycerol phosphate synthase (272 aa).

The protein belongs to the TrpC family.

It catalyses the reaction 1-(2-carboxyphenylamino)-1-deoxy-D-ribulose 5-phosphate + H(+) = (1S,2R)-1-C-(indol-3-yl)glycerol 3-phosphate + CO2 + H2O. The protein operates within amino-acid biosynthesis; L-tryptophan biosynthesis; L-tryptophan from chorismate: step 4/5. The sequence is that of Indole-3-glycerol phosphate synthase from Mycobacteroides abscessus (strain ATCC 19977 / DSM 44196 / CCUG 20993 / CIP 104536 / JCM 13569 / NCTC 13031 / TMC 1543 / L948) (Mycobacterium abscessus).